The sequence spans 231 residues: 4-aminobenzoate synthase (231 aa).

6 residues coordinate Fe(2+): Glu81, His88, Glu142, His174, Asp178, and His181.

Belongs to the CADD family. In terms of assembly, homodimer. During infection, interacts with death domains of mammalian tumor necrosis factor (TNF) family receptors Fas, DR4, DR5 and to some extent TNFR1, but not with the respective downstream adapters. Fe(2+) is required as a cofactor. It depends on Mn(2+) as a cofactor.

It is found in the secreted. Its subcellular location is the host cytoplasm. Its activity is regulated as follows. The protein is a cosubstrate rather than a true enzyme and is left in an inactive state after a single turnover. Inactive under anaerobic conditions. Functionally, involved in de novo para-aminobenzoate (PABA) biosynthesis. Acts as a self-sacrificing or 'suicide' enzyme that utilizes its own active site tyrosine residue(s) as the substrate for PABA synthesis. The side chain of the tyrosine residue is released from the protein backbone via cleavage of the C(alpha)-C(beta) bond, leaving a glycine in place of the original tyrosine residue. Reaction requires O(2) and a reduced dimetal cofactor. Was also identified as a specific toxin that associates with death domains of tumor necrosis factor family (TNF) receptors and induces apoptosis in mammalian cell lines through a Caspase-dependent mechanism. The sequence is that of 4-aminobenzoate synthase from Chlamydia trachomatis serovar D (strain ATCC VR-885 / DSM 19411 / UW-3/Cx).